The following is a 289-amino-acid chain: MPITSAASRLGTTAYQTNPIELRPNWTAEDAKIVIQAVYRQVLGNDYLMQSERLTSLESLLTNGKLSVRDFVRAVAKSELYKTKFLYPHFQTRVIELNFKHLLGRAPYDESEVIEHLDRDQNQGFDADIDSYIDSAEYDTYFGDSIVPYYRDLVTTGVGQRTVGFTRSFRLYRGYANSDRSQLAGSSSRLASDLATNSATAIIAPSGGTQGWSYLPSKQGTAPSRTFGRSSQGSTPRLYRIEVTGISLPRYPKVRRSNKEFIVPYEQLSSTLQQINKLGGKVASITFAQ.

Residues 2–180 form the PBS-linker domain; sequence PITSAASRLG…LYRGYANSDR (179 aa). Residues 213–233 are disordered; that stretch reads SYLPSKQGTAPSRTFGRSSQG. The segment covering 216 to 233 has biased composition (polar residues); the sequence is PSKQGTAPSRTFGRSSQG. Positions 236–288 constitute a CpcD-like domain; the sequence is PRLYRIEVTGISLPRYPKVRRSNKEFIVPYEQLSSTLQQINKLGGKVASITFA.

The protein belongs to the phycobilisome linker protein family.

Its subcellular location is the cellular thylakoid membrane. In terms of biological role, rod linker protein, associated with phycocyanin. Linker polypeptides determine the state of aggregation and the location of the disk-shaped phycobiliprotein units within the phycobilisome and modulate their spectroscopic properties in order to mediate a directed and optimal energy transfer. The chain is Phycobilisome 39 kDa linker polypeptide, phycocyanin-associated, rod (cpcI2) from Microchaete diplosiphon (Fremyella diplosiphon).